Reading from the N-terminus, the 184-residue chain is Protein MEH1 (184 aa).

G2 carries the N-myristoyl glycine lipid modification. Residues C7 and C8 are each lipidated (S-palmitoyl cysteine). Residues Q30 to L71 adopt a coiled-coil conformation. Positions L89–P147 are disordered. Residues A92 to G112 show a composition bias toward basic and acidic residues. The segment covering S117 to P147 has biased composition (polar residues). 2 positions are modified to phosphoserine: S146 and S149.

As to quaternary structure, component of the GSE complex composed of GTR1, GTR2, SLM4, MEH1 and LTV1. Component of the EGO complex, at least composed of GTR2, SLM4 and MEH1.

It localises to the vacuole membrane. Component of the GSE complex, a GTPase complex required for intracellular sorting of GAP1 out of the endosome. Component of the EGO complex, a complex involved in the regulation of microautophagy. In Saccharomyces cerevisiae (strain ATCC 204508 / S288c) (Baker's yeast), this protein is Protein MEH1 (MEH1).